The primary structure comprises 80 residues: Polcalcin Cyn d 7 (80 aa).

EF-hand domains follow at residues 2–37 (ADTG…LGST) and 40–72 (DEVQ…NPGL). Ca(2+) contacts are provided by Asp-15, Asn-17, Asp-19, Lys-21, Glu-26, Asp-50, Asp-52, Asp-54, and Glu-61.

This chain is Polcalcin Cyn d 7, found in Cynodon dactylon (Bermuda grass).